The primary structure comprises 53 residues: IgW transmembrane form Tm1T3/Tm6T3/Tm3C4 (53 aa).

The disordered stretch occupies residues 1 to 25 (VQAVPPDVKGEEGKEEVEDMDGDDN). Residues 13 to 24 (GKEEVEDMDGDD) show a composition bias toward acidic residues. The chain crosses the membrane as a helical span at residues 29-49 (VAAFAILFILSFLYSTFVTVV).

Expressed in the spleen, pancreas, peripheral blood lymphocytes and at low levels in the epigonal organ.

The protein localises to the membrane. This is IgW transmembrane form Tm1T3/Tm6T3/Tm3C4 from Ginglymostoma cirratum (Nurse shark).